The sequence spans 239 residues: EF-hand domain-containing protein D2 (239 aa).

The disordered stretch occupies residues methionine 1–aspartate 51. Alanine 2 is subject to N-acetylalanine. Serine 11 is modified (phosphoserine). Residues alanine 32–alanine 46 show a composition bias toward low complexity. 2 positions are modified to phosphoserine: serine 73 and serine 75. The residue at position 82 (tyrosine 82) is a Phosphotyrosine. EF-hand domains are found at residues lysine 91–proline 126 and glutamine 127–glycine 162. Residues aspartate 104, aspartate 108, glutamate 115, aspartate 140, aspartate 142, aspartate 144, lysine 146, and glutamate 151 each coordinate Ca(2+). Lysine 232 bears the N6-acetyllysine mark.

As to quaternary structure, interacts with CASP9; with inactive form.

It localises to the membrane raft. May regulate B-cell receptor (BCR)-induced immature and primary B-cell apoptosis. Plays a role as negative regulator of the canonical NF-kappa-B-activating branch. Controls spontaneous apoptosis through the regulation of BCL2L1 abundance. The chain is EF-hand domain-containing protein D2 (Efhd2) from Rattus norvegicus (Rat).